We begin with the raw amino-acid sequence, 443 residues long: Xaa-Pro dipeptidase (443 aa).

Mn(2+)-binding residues include Asp246, Asp257, His339, Glu384, and Glu423.

It belongs to the peptidase M24B family. Bacterial-type prolidase subfamily. Mn(2+) is required as a cofactor.

The catalysed reaction is Xaa-L-Pro dipeptide + H2O = an L-alpha-amino acid + L-proline. Functionally, splits dipeptides with a prolyl residue in the C-terminal position. The sequence is that of Xaa-Pro dipeptidase from Escherichia coli O7:K1 (strain IAI39 / ExPEC).